The following is a 365-amino-acid chain: Methylthioribose-1-phosphate isomerase (365 aa).

Catalysis depends on Asp-249, which acts as the Proton donor.

Belongs to the eIF-2B alpha/beta/delta subunits family. MtnA subfamily.

The protein resides in the cytoplasm. Its subcellular location is the nucleus. The catalysed reaction is 5-(methylsulfanyl)-alpha-D-ribose 1-phosphate = 5-(methylsulfanyl)-D-ribulose 1-phosphate. It functions in the pathway amino-acid biosynthesis; L-methionine biosynthesis via salvage pathway; L-methionine from S-methyl-5-thio-alpha-D-ribose 1-phosphate: step 1/6. In terms of biological role, catalyzes the interconversion of methylthioribose-1-phosphate (MTR-1-P) into methylthioribulose-1-phosphate (MTRu-1-P). This chain is Methylthioribose-1-phosphate isomerase, found in Ostreococcus lucimarinus (strain CCE9901).